A 337-amino-acid polypeptide reads, in one-letter code: Ornithine carbamoyltransferase (337 aa).

Carbamoyl phosphate-binding positions include 57-60 (STRT), Gln84, Arg108, and 135-138 (HPTQ). L-ornithine contacts are provided by residues Asn167, Asp231, and 235–236 (SM). Residues 272-273 (CL) and Arg317 contribute to the carbamoyl phosphate site.

The protein belongs to the aspartate/ornithine carbamoyltransferase superfamily. OTCase family.

The protein resides in the cytoplasm. The catalysed reaction is carbamoyl phosphate + L-ornithine = L-citrulline + phosphate + H(+). It functions in the pathway amino-acid degradation; L-arginine degradation via ADI pathway; carbamoyl phosphate from L-arginine: step 2/2. Its function is as follows. Reversibly catalyzes the transfer of the carbamoyl group from carbamoyl phosphate (CP) to the N(epsilon) atom of ornithine (ORN) to produce L-citrulline. The sequence is that of Ornithine carbamoyltransferase from Streptococcus equi subsp. equi (strain 4047).